The chain runs to 212 residues: Probable plastid-lipid-associated protein 11, chloroplastic (212 aa).

The N-terminal 25 residues, M1 to S25, are a transit peptide targeting the chloroplast.

It belongs to the PAP/fibrillin family.

The protein resides in the plastid. Its subcellular location is the chloroplast thylakoid. This is Probable plastid-lipid-associated protein 11, chloroplastic (PAP11) from Arabidopsis thaliana (Mouse-ear cress).